Consider the following 773-residue polypeptide: Transducin-like enhancer protein 4 (773 aa).

Disordered regions lie at residues 1-22, 140-162, and 182-357; these read MIRD…QPAQ, HGHG…AIPP, and LPIK…DPLA. A q domain region spans residues 1 to 136; that stretch reads MIRDLSKMYP…AIIGQQLQAQ (136 aa). The interval 137–204 is GP domain; sequence HLSHGHGLPV…HQRDRDSIKS (68 aa). The span at 183–202 shows a compositional bias: basic and acidic residues; it reads PIKDEKKHHDNDHQRDRDSI. The span at 203–214 shows a compositional bias: low complexity; it reads KSSSVSPSASFR. Positions 205 to 274 are ccN domain; it reads SSVSPSASFR…SPRGSPAHSP (70 aa). Phosphoserine occurs at positions 208, 212, 216, and 222. Residues 215–252 are compositionally biased toward basic and acidic residues; the sequence is GSEKHRNSTDYSSESKKQKTEEKEIAARYDSDGEKSDD. Lys237 is subject to N6-acetyllysine. Phosphoserine is present on Ser245. Ser250 carries the phosphoserine; by CK2 modification. Ser265 carries the phosphoserine; by CDK1 modification. Phosphoserine occurs at positions 269 and 273. A compositionally biased stretch (basic and acidic residues) spans 273 to 289; that stretch reads SPRENGLDKTRLLKKDA. The tract at residues 275-452 is SP domain; sequence RENGLDKTRL…PGGKPAYSFH (178 aa). Lys281 carries the post-translational modification N6-acetyllysine. A compositionally biased stretch (low complexity) spans 290 to 305; that stretch reads PISPASVASSSSTPSS. Phosphoserine is present on Ser292. Polar residues predominate over residues 317 to 328; that stretch reads TTPVSKSNTPTP. Thr318 is modified (phosphothreonine). Ser321 and Ser323 each carry phosphoserine. 4 positions are modified to phosphothreonine: Thr325, Thr327, Thr334, and Thr340. At Ser419 the chain carries Phosphoserine. 7 WD repeats span residues 485-523, 531-570, 575-614, 617-656, 658-697, 699-738, and 740-773; these read NHGE…NKSP, NRDN…PRIK, SSAP…LVRQ, GHTD…QLQQ, DFTS…KYQL, LHES…SIFQ, and KESS…EVIY.

Belongs to the WD repeat Groucho/TLE family. Homooligomer and heterooligomer with other family members. Interacts with PAX5. Interacts with LEF1, TCF7, TCF7L1 and TCF7L2. Interacts with ZNF703; TLE4 may mediate ZNF703 transcriptional repression. Interacts with SIX3 and SIX6. Interacts with PAX2. Interacts with TLE1. Post-translationally, phosphorylated. PAX5 binding increases phosphorylation. In terms of processing, ubiquitinated by XIAP/BIRC4. As to expression, expressed in bone marrow-derived macrophages.

It is found in the nucleus. Functionally, transcriptional corepressor that binds to a number of transcription factors. Inhibits the transcriptional activation mediated by PAX5, and by CTNNB1 and TCF family members in Wnt signaling. The effects of full-length TLE family members may be modulated by association with dominant-negative AES. Essential for the transcriptional repressor activity of SIX3 during retina and lens development and for SIX3 transcriptional auto-repression. Involved in transcriptional repression of GNRHR and enhances MSX1-mediated transcriptional repression of CGA/alpha-GSU. This chain is Transducin-like enhancer protein 4 (Tle4), found in Mus musculus (Mouse).